The following is a 406-amino-acid chain: Vacuole membrane protein 1 (406 aa).

The span at 1–20 (MAENGKNCDQRRVAMNKEQH) shows a compositional bias: basic and acidic residues. Positions 1–36 (MAENGKNCDQRRVAMNKEQHNGNFTDPSSVNEKKRR) are disordered. Ala-2 carries the post-translational modification N-acetylalanine. The Cytoplasmic segment spans residues 2–43 (AENGKNCDQRRVAMNKEQHNGNFTDPSSVNEKKRREREERQN). Polar residues predominate over residues 21–30 (NGNFTDPSSV). The helical transmembrane segment at 44–64 (IVLWRQPLITLQYFSLEILVI) threads the bilayer. The Extracellular segment spans residues 65-77 (LKEWTSKLWHRQS). The chain crosses the membrane as a helical span at residues 78-98 (IVVSFLLLLAVLIATYYVEGA). Topologically, residues 99–109 (HQQYVQRIEKQ) are cytoplasmic. The chain crosses the membrane as a helical span at residues 110 to 130 (FLLYAYWIGLGILSSVGLGTG). At 131-250 (LHTFLLYLGP…ASRAKLAVQK (120 aa)) the chain is on the extracellular side. Residues 173–316 (GTEGTISLWS…FVIITFSKHI (144 aa)) form a VTT domain region. Residues 251 to 271 (LVQKVGFFGILACASIPNPLF) traverse the membrane as a helical segment. At 272–273 (DL) the chain is on the cytoplasmic side. Residues 274 to 294 (AGITCGHFLVPFWTFFGATLI) traverse the membrane as a helical segment. At 295 to 305 (GKAIIKMHIQK) the chain is on the extracellular side. Residues 306–326 (IFVIITFSKHIVEQMVAFIGA) form a helical membrane-spanning segment. Residues 327-363 (VPGIGPSLQKPFQEYLEAQRQKLHHKSEMGTPQGENW) lie on the Cytoplasmic side of the membrane. The helical transmembrane segment at 364–384 (LSWMFEKLVVVMVCYFILSII) threads the bilayer. Residues 385–406 (NSMAQSYAKRIQQRLNSEEKTK) lie on the Extracellular side of the membrane.

This sequence belongs to the VMP1 family. In terms of assembly, interacts with BECN1. Interacts with TJP1. Interacts with TP53INP2. Interacts with TMEM41B. Interacts with ATP2A2, PLN and SLN; competes with PLN and SLN to prevent them from forming an inhibitory complex with ATP2A2. Interacts with ATG2A.

It is found in the endoplasmic reticulum-Golgi intermediate compartment membrane. The protein localises to the cell membrane. It localises to the vacuole membrane. The protein resides in the endoplasmic reticulum membrane. It carries out the reaction a 1,2-diacyl-sn-glycero-3-phospho-L-serine(in) = a 1,2-diacyl-sn-glycero-3-phospho-L-serine(out). The enzyme catalyses cholesterol(in) = cholesterol(out). It catalyses the reaction a 1,2-diacyl-sn-glycero-3-phosphocholine(in) = a 1,2-diacyl-sn-glycero-3-phosphocholine(out). The catalysed reaction is a 1,2-diacyl-sn-glycero-3-phosphoethanolamine(in) = a 1,2-diacyl-sn-glycero-3-phosphoethanolamine(out). Its function is as follows. Phospholipid scramblase involved in lipid homeostasis and membrane dynamics processes. Has phospholipid scramblase activity toward cholesterol and phosphatidylserine, as well as phosphatidylethanolamine and phosphatidylcholine. Required for autophagosome formation: participates in early stages of autophagosome biogenesis at the endoplasmic reticulum (ER) membrane by reequilibrating the leaflets of the ER as lipids are extracted by ATG2 (ATG2A or ATG2B) to mediate autophagosome assembly. Regulates ATP2A2 activity to control ER-isolation membrane contacts for autophagosome formation. In addition to autophagy, involved in other processes in which phospholipid scramblase activity is required. Modulates ER contacts with lipid droplets, mitochondria and endosomes. Plays an essential role in formation of cell junctions. Upon stress such as bacterial and viral infection, promotes formation of cytoplasmic vacuoles followed by cell death. Involved in the cytoplasmic vacuolization of acinar cells during the early stage of acute pancreatitis. In Pongo abelii (Sumatran orangutan), this protein is Vacuole membrane protein 1.